A 394-amino-acid polypeptide reads, in one-letter code: Probable malate--CoA ligase subunit beta (394 aa).

Positions 9 to 244 (KELLARHGVH…KSQEDPRETF (236 aa)) constitute an ATP-grasp domain. Lys46, Glu99, Val102, and Glu107 together coordinate ATP. Residues Asn199 and Asp213 each contribute to the Mg(2+) site.

The protein belongs to the succinate/malate CoA ligase beta subunit family. As to quaternary structure, heterotetramer of two alpha and two beta subunits. The cofactor is Mg(2+).

It catalyses the reaction (S)-malate + ATP + CoA = (S)-malyl-CoA + ADP + phosphate. Its pathway is one-carbon metabolism; formaldehyde assimilation via serine pathway. In Mesorhizobium japonicum (strain LMG 29417 / CECT 9101 / MAFF 303099) (Mesorhizobium loti (strain MAFF 303099)), this protein is Probable malate--CoA ligase subunit beta (mtkA).